A 106-amino-acid polypeptide reads, in one-letter code: MADFLGMMKQAAQLQSKMKAMQAELDQIEVEGLSGGGLVKVRMSAKMEVRGISIDPSLIKADEREVLEDLLVAAHGDAHRKAEAAMQEKMQALTGGLGLPPGLGLG.

It belongs to the YbaB/EbfC family. In terms of assembly, homodimer.

Its subcellular location is the cytoplasm. The protein localises to the nucleoid. Functionally, binds to DNA and alters its conformation. May be involved in regulation of gene expression, nucleoid organization and DNA protection. The chain is Nucleoid-associated protein Rpal_0620 from Rhodopseudomonas palustris (strain TIE-1).